The chain runs to 619 residues: Chitinase C (619 aa).

The signal sequence occupies residues 1-30 (MRFRHKAAALAATLALPLAGLVGLASPAQA). In terms of domain architecture, CBM2 spans 31–134 (ATSATATFAK…KLNGGSCDGT (104 aa)). The Fibronectin type-III domain occupies 144–229 (APGTPTASNI…GAVKVTTTGG (86 aa)). The tract at residues 212–236 (ADQTGPASGAVKVTTTGGGDGGNPG) is disordered. Residues 227 to 236 (TGGGDGGNPG) are compositionally biased toward gly residues. Positions 240–619 (EVKMGYFTNW…TPAVRTTRRH (380 aa)) constitute a GH18 domain. Chitin-binding positions include 312 to 313 (DQ) and 339 to 342 (GGWT). Glutamate 382 serves as the catalytic Proton donor. Residues tyrosine 383, 449-452 (MTYD), and tryptophan 589 each bind chitin.

Belongs to the glycosyl hydrolase 18 family. Chitinase class II subfamily.

The catalysed reaction is Random endo-hydrolysis of N-acetyl-beta-D-glucosaminide (1-&gt;4)-beta-linkages in chitin and chitodextrins.. This is Chitinase C (chiC) from Streptomyces lividans.